A 96-amino-acid polypeptide reads, in one-letter code: Large ribosomal subunit protein eL14 (96 aa).

Belongs to the eukaryotic ribosomal protein eL14 family.

This Staphylothermus marinus (strain ATCC 43588 / DSM 3639 / JCM 9404 / F1) protein is Large ribosomal subunit protein eL14.